Here is a 138-residue protein sequence, read N- to C-terminus: Putative nickel-responsive regulator (138 aa).

4 residues coordinate Ni(2+): His78, His89, His91, and Cys97.

Belongs to the transcriptional regulatory CopG/NikR family. The cofactor is Ni(2+).

Transcriptional regulator. The protein is Putative nickel-responsive regulator of Pyrococcus horikoshii (strain ATCC 700860 / DSM 12428 / JCM 9974 / NBRC 100139 / OT-3).